Here is a 182-residue protein sequence, read N- to C-terminus: Putative minor fimbrial subunit PmfF (182 aa).

Residues 1–22 form the signal peptide; the sequence is MKNSIIKSAITCLLLLSPSTFA.

This sequence belongs to the fimbrial protein family.

The protein localises to the fimbrium. This chain is Putative minor fimbrial subunit PmfF (pmfF), found in Proteus mirabilis (strain HI4320).